The chain runs to 61 residues: Large ribosomal subunit protein uL30 (61 aa).

The protein belongs to the universal ribosomal protein uL30 family. As to quaternary structure, part of the 50S ribosomal subunit.

The chain is Large ribosomal subunit protein uL30 from Lactobacillus acidophilus (strain ATCC 700396 / NCK56 / N2 / NCFM).